The chain runs to 372 residues: tRNA-specific 2-thiouridylase MnmA (372 aa).

ATP-binding positions include 16-23 and Met42; that span reads GMSGGVDS. Positions 102 to 104 are interaction with target base in tRNA; the sequence is NPD. Cys107 acts as the Nucleophile in catalysis. Cys107 and Cys205 are oxidised to a cystine. ATP is bound at residue Gly132. The segment at 155–157 is interaction with tRNA; sequence KDQ. Cys205 serves as the catalytic Cysteine persulfide intermediate. Residues 317–318 are interaction with tRNA; that stretch reads RY.

This sequence belongs to the MnmA/TRMU family.

The protein resides in the cytoplasm. It carries out the reaction S-sulfanyl-L-cysteinyl-[protein] + uridine(34) in tRNA + AH2 + ATP = 2-thiouridine(34) in tRNA + L-cysteinyl-[protein] + A + AMP + diphosphate + H(+). Catalyzes the 2-thiolation of uridine at the wobble position (U34) of tRNA, leading to the formation of s(2)U34. The sequence is that of tRNA-specific 2-thiouridylase MnmA from Shewanella denitrificans (strain OS217 / ATCC BAA-1090 / DSM 15013).